Consider the following 859-residue polypeptide: MEPLSHRGLPRLSWIDTLYSNFSYGTDEYDGEGNEEQKGPPEGSETMPYIDESPTMSPQLSARSQGGGDGVSPTPPEGLAPGVEAGKGLEMRKLVLSGFLASEEIYINQLEALLLPMKPLKATATTSQPVLTIQQIETIFYKIQDIYEIHKEFYDNLCPKVQQWDSQVTMGHLFQKLASQLGVYKAFVDNYKVALETAEKCSQSNNQFQKISEELKVKGPKDSKDSHTSVTMEALLYKPIDRVTRSTLVLHDLLKHTPVDHPDYPLLQDALRISQNFLSSINEDIDPRRTAVTTPKGETRQLVKDGFLVEVSESSRKLRHVFLFTDVLLCAKLKKTSAGKHQQYDCKWYIPLADLVFPSPEESEASPQVHPFPDHELEDMKMKISALKSEIQKEKANKGQSRAIERLKKKMFENEFLLLLNSPTIPFRIHNRNGKSYLFLLSSDYERSEWREAIQKLQKKDLQAFVLSSVELQVLTGSCFKLRTVHNIPVTSNKDDDESPGLYGFLHVIVHSAKGFKQSANLYCTLEVDSFGYFVSKAKTRVFRDTAEPKWDEEFEIELEGSQSLRILCYEKCYDKTKVNKDNNEIVDKIMGKGQIQLDPQTVETKNWHTDVIEMNGIKVEFSMKFTSRDMSLKRTPSKKQTGVFGVKISVVTKRERSKVPYIVRQCVEEVEKRGIEEVGIYRISGVATDIQALKAVFDANNKDILLMLSDMDINAIAGTLKLYFRELPEPLLTDRLYPAFMEGIALSDPAAKENCMMHLLRSLPDPNLITFLFLLEHLKRVAEKEPINKMSLHNLATVFGPTLLRPSEVESKAHLTSAADIWSHDVMAQVQVLLYYLQHPPISFAELKRNTLYFSTDV.

The segment at 26-84 (TDEYDGEGNEEQKGPPEGSETMPYIDESPTMSPQLSARSQGGGDGVSPTPPEGLAPGVE) is disordered. Residues 54-64 (PTMSPQLSARS) show a composition bias toward polar residues. Ser57 bears the Phosphoserine mark. One can recognise a DH domain in the interval 91–284 (MRKLVLSGFL…QNFLSSINED (194 aa)). One can recognise a PH domain in the interval 301 to 459 (QLVKDGFLVE…WREAIQKLQK (159 aa)). Residues 484 to 613 (TVHNIPVTSN…ETKNWHTDVI (130 aa)) form the C2 domain. One can recognise a Rho-GAP domain in the interval 647-845 (VKISVVTKRE…YYLQHPPISF (199 aa)).

Interacts with DLG4. Highly enriched in the brain. Much weaker expression in heart, lung and muscle.

Its subcellular location is the cell projection. The protein localises to the dendritic spine. It localises to the axon. The protein resides in the synapse. Protein with a unique structure having two opposing regulatory activities toward small GTP-binding proteins. The C-terminus is a GTPase-activating protein domain which stimulates GTP hydrolysis by RAC1, RAC2 and CDC42. Accelerates the intrinsic rate of GTP hydrolysis of RAC1 or CDC42, leading to down-regulation of the active GTP-bound form. The central Dbl homology (DH) domain functions as a guanine nucleotide exchange factor (GEF) that modulates the GTPases CDC42, RHOA and RAC1. Promotes the conversion of CDC42, RHOA and RAC1 from the GDP-bound to the GTP-bound form. Functions as an important negative regulator of neuronal RAC1 activity. Regulates macrophage functions such as CSF-1 directed motility and phagocytosis through the modulation of RAC1 activity. This chain is Active breakpoint cluster region-related protein, found in Homo sapiens (Human).